A 342-amino-acid chain; its full sequence is Tetraacyldisaccharide 4'-kinase (342 aa).

68 to 75 serves as a coordination point for ATP; sequence TVGGTGKT.

The protein belongs to the LpxK family.

The enzyme catalyses a lipid A disaccharide + ATP = a lipid IVA + ADP + H(+). Its pathway is glycolipid biosynthesis; lipid IV(A) biosynthesis; lipid IV(A) from (3R)-3-hydroxytetradecanoyl-[acyl-carrier-protein] and UDP-N-acetyl-alpha-D-glucosamine: step 6/6. Its function is as follows. Transfers the gamma-phosphate of ATP to the 4'-position of a tetraacyldisaccharide 1-phosphate intermediate (termed DS-1-P) to form tetraacyldisaccharide 1,4'-bis-phosphate (lipid IVA). This is Tetraacyldisaccharide 4'-kinase from Burkholderia ambifaria (strain MC40-6).